A 432-amino-acid polypeptide reads, in one-letter code: Gamma-glutamyl phosphate reductase (432 aa).

The protein belongs to the gamma-glutamyl phosphate reductase family.

Its subcellular location is the cytoplasm. The enzyme catalyses L-glutamate 5-semialdehyde + phosphate + NADP(+) = L-glutamyl 5-phosphate + NADPH + H(+). It participates in amino-acid biosynthesis; L-proline biosynthesis; L-glutamate 5-semialdehyde from L-glutamate: step 2/2. Functionally, catalyzes the NADPH-dependent reduction of L-glutamate 5-phosphate into L-glutamate 5-semialdehyde and phosphate. The product spontaneously undergoes cyclization to form 1-pyrroline-5-carboxylate. This chain is Gamma-glutamyl phosphate reductase, found in Ruminiclostridium cellulolyticum (strain ATCC 35319 / DSM 5812 / JCM 6584 / H10) (Clostridium cellulolyticum).